A 521-amino-acid chain; its full sequence is UDP-N-acetylmuramate--L-alanine ligase (521 aa).

136 to 142 (GAHGKTT) provides a ligand contact to ATP.

The protein belongs to the MurCDEF family.

It is found in the cytoplasm. The catalysed reaction is UDP-N-acetyl-alpha-D-muramate + L-alanine + ATP = UDP-N-acetyl-alpha-D-muramoyl-L-alanine + ADP + phosphate + H(+). It functions in the pathway cell wall biogenesis; peptidoglycan biosynthesis. Its function is as follows. Cell wall formation. In Bifidobacterium adolescentis (strain ATCC 15703 / DSM 20083 / NCTC 11814 / E194a), this protein is UDP-N-acetylmuramate--L-alanine ligase.